The chain runs to 230 residues: Dephospho-CoA kinase (230 aa).

The interval 1–20 (MSKYAAIPSPYSHQPQAPDH) is disordered. The DPCK domain occupies 26-225 (VVGLTGGIGS…QDYLKLAQQL (200 aa)). 34-39 (GSGKSA) is an ATP binding site.

It belongs to the CoaE family.

The protein resides in the cytoplasm. It carries out the reaction 3'-dephospho-CoA + ATP = ADP + CoA + H(+). It participates in cofactor biosynthesis; coenzyme A biosynthesis; CoA from (R)-pantothenate: step 5/5. Functionally, catalyzes the phosphorylation of the 3'-hydroxyl group of dephosphocoenzyme A to form coenzyme A. The polypeptide is Dephospho-CoA kinase (Psychrobacter arcticus (strain DSM 17307 / VKM B-2377 / 273-4)).